We begin with the raw amino-acid sequence, 241 residues long: Urease accessory protein UreF 1 (241 aa).

It belongs to the UreF family. UreD, UreF and UreG form a complex that acts as a GTP-hydrolysis-dependent molecular chaperone, activating the urease apoprotein by helping to assemble the nickel containing metallocenter of UreC. The UreE protein probably delivers the nickel.

Its subcellular location is the cytoplasm. Functionally, required for maturation of urease via the functional incorporation of the urease nickel metallocenter. This is Urease accessory protein UreF 1 from Brucella melitensis biotype 1 (strain ATCC 23456 / CCUG 17765 / NCTC 10094 / 16M).